The primary structure comprises 531 residues: Zinc finger protein 703-B (531 aa).

The segment covering 1–10 (MNCSPPGSCT) has biased composition (polar residues). 3 disordered regions span residues 1–28 (MNCS…ATLA), 88–249 (SQIG…VAPI), and 295–318 (VGNQ…LTGA). Composition is skewed to low complexity over residues 19 to 28 (TPATPCATLA) and 113 to 122 (RSSSLKLGES). Residues 171 to 180 (SPSSRVSSPG) are compositionally biased toward polar residues. Positions 183–198 (CESKNNESQEKKEPEV) are enriched in basic and acidic residues. The span at 199-215 (NKSSLETSQANPTLTRA) shows a compositional bias: polar residues. Low complexity predominate over residues 216–227 (SISNSSAESSQS). The C2H2-type zinc-finger motif lies at 404-432 (HICNWVSASGPCDKRFATSEELLAHLRTH).

It belongs to the Elbow/Noc family.

Its subcellular location is the nucleus. It is found in the cytoplasm. In terms of biological role, transcriptional corepressor which does not bind directly to DNA and may regulate transcription through recruitment of histone deacetylases to gene promoters. Regulates cell adhesion, migration and proliferation. Involved in specification of the lateral neural plate border (NPB). May be required for segmental gene expression during hindbrain development. This is Zinc finger protein 703-B (znf703-b) from Xenopus laevis (African clawed frog).